We begin with the raw amino-acid sequence, 345 residues long: Opioid-binding protein/cell adhesion molecule (345 aa).

A signal peptide spans 1-27 (MGVCGYLFLPWKCLVVVSLRLLFLVPT). Ig-like C2-type domains follow at residues 39–126 (PKAM…PKTS), 136–219 (PQIM…VKIT), and 223–310 (PPYI…ASIT). Asparagine 44, asparagine 70, and asparagine 140 each carry an N-linked (GlcNAc...) asparagine glycan. Cysteine 57 and cysteine 115 are joined by a disulfide. Intrachain disulfides connect cysteine 157–cysteine 202 and cysteine 244–cysteine 296. Asparagine 285, asparagine 293, and asparagine 306 each carry an N-linked (GlcNAc...) asparagine glycan. Asparagine 322 carries the GPI-anchor amidated asparagine lipid modification. Residues 323 to 345 (SASRALACLWLSGTLLAHFFIKF) constitute a propeptide, removed in mature form.

It belongs to the immunoglobulin superfamily. IgLON family.

The protein resides in the cell membrane. Binds opioids in the presence of acidic lipids; probably involved in cell contact. This chain is Opioid-binding protein/cell adhesion molecule (OPCML), found in Homo sapiens (Human).